Here is a 233-residue protein sequence, read N- to C-terminus: tRNA (guanine-N(7)-)-methyltransferase (233 aa).

Residues 1-22 are disordered; it reads MIDENHPMRAAGNFFGRRHGKP. S-adenosyl-L-methionine contacts are provided by Glu-64, Glu-89, Asp-116, and Asp-138. Asp-138 is an active-site residue. Substrate is bound by residues Lys-142, Asp-174, and 212–215; that span reads TRYE.

It belongs to the class I-like SAM-binding methyltransferase superfamily. TrmB family.

The catalysed reaction is guanosine(46) in tRNA + S-adenosyl-L-methionine = N(7)-methylguanosine(46) in tRNA + S-adenosyl-L-homocysteine. Its pathway is tRNA modification; N(7)-methylguanine-tRNA biosynthesis. In terms of biological role, catalyzes the formation of N(7)-methylguanine at position 46 (m7G46) in tRNA. This Brucella abortus (strain 2308) protein is tRNA (guanine-N(7)-)-methyltransferase.